The chain runs to 593 residues: Proline--tRNA ligase (593 aa).

Belongs to the class-II aminoacyl-tRNA synthetase family. ProS type 1 subfamily. Homodimer.

It is found in the cytoplasm. The catalysed reaction is tRNA(Pro) + L-proline + ATP = L-prolyl-tRNA(Pro) + AMP + diphosphate. Functionally, catalyzes the attachment of proline to tRNA(Pro) in a two-step reaction: proline is first activated by ATP to form Pro-AMP and then transferred to the acceptor end of tRNA(Pro). As ProRS can inadvertently accommodate and process non-cognate amino acids such as alanine and cysteine, to avoid such errors it has two additional distinct editing activities against alanine. One activity is designated as 'pretransfer' editing and involves the tRNA(Pro)-independent hydrolysis of activated Ala-AMP. The other activity is designated 'posttransfer' editing and involves deacylation of mischarged Ala-tRNA(Pro). The misacylated Cys-tRNA(Pro) is not edited by ProRS. In Synechococcus sp. (strain CC9902), this protein is Proline--tRNA ligase.